The sequence spans 391 residues: Thioredoxin-interacting protein (391 aa).

Lys212 is covalently cross-linked (Glycyl lysine isopeptide (Lys-Gly) (interchain with G-Cter in ubiquitin)). Ser361 is subject to Phosphoserine.

This sequence belongs to the arrestin family. As to quaternary structure, homodimer; disulfide-linked. Interacts with TXN/thioredoxin through its redox-active site. Interacts with transcriptional repressors ZBTB16, ZBTB32 and HDAC1. Interacts with DDIT4. Ubiquitinated; undergoes heterotypic 'Lys-48'-/'Lys-63'-branched polyubiquitination catalyzed by ITCH and UBR5 resulting in proteasomal degradation. Deubiquitinated by USP5, leading to TXNIP stabilization.

The protein resides in the cytoplasm. The protein localises to the nucleus. Its function is as follows. May act as an oxidative stress mediator by inhibiting thioredoxin activity or by limiting its bioavailability. Interacts with COPS5 and restores COPS5-induced suppression of CDKN1B stability, blocking the COPS5-mediated translocation of CDKN1B from the nucleus to the cytoplasm. Functions as a transcriptional repressor, possibly by acting as a bridge molecule between transcription factors and corepressor complexes, and over-expression will induce G0/G1 cell cycle arrest. Required for the maturation of natural killer cells. Acts as a suppressor of tumor cell growth. Inhibits the proteasomal degradation of DDIT4, and thereby contributes to the inhibition of the mammalian target of rapamycin complex 1 (mTORC1). This is Thioredoxin-interacting protein (TXNIP) from Homo sapiens (Human).